Reading from the N-terminus, the 90-residue chain is Progonadoliberin-3 (90 aa).

A signal peptide spans methionine 1 to serine 23. Glutamine 24 carries the pyrrolidone carboxylic acid modification. Glycine amide is present on glycine 33. The disordered stretch occupies residues leucine 56–lysine 90.

It belongs to the GnRH family.

The protein resides in the secreted. Stimulates the secretion of gonadotropins. This chain is Progonadoliberin-3 (gnrh3), found in Dicentrarchus labrax (European seabass).